The chain runs to 89 residues: Defensin-like protein 197 (89 aa).

A signal peptide spans 1-26 (MKFVSVFLVLFIFFLVVLEAPEKIEA). Cystine bridges form between cysteine 33/cysteine 86, cysteine 46/cysteine 70, cysteine 55/cysteine 81, and cysteine 59/cysteine 83.

This sequence belongs to the DEFL family. Protease inhibitor I18 (RTI/MTI-2) subfamily.

The protein localises to the secreted. This Arabidopsis thaliana (Mouse-ear cress) protein is Defensin-like protein 197 (ATTI6).